Consider the following 134-residue polypeptide: MNALAQKTPSPPTLVFTEAAARKVKGLIDEENNPYLNLRVFITGGGCSGFQYGFTFDEAINSDDLVIEKQLEEEDDDEGGTGQMALVKLLVDPLSLQYLQGAEIDYHEDVSGAQFVIRNPNAKTTCGCGSSFAA.

3 residues coordinate iron-sulfur cluster: C47, C126, and C128.

The protein belongs to the HesB/IscA family. Homodimer. It depends on iron-sulfur cluster as a cofactor.

Required for insertion of 4Fe-4S clusters for at least IspG. The protein is Iron-sulfur cluster insertion protein ErpA of Coxiella burnetii (strain Dugway 5J108-111).